We begin with the raw amino-acid sequence, 126 residues long: MDMKHTLLEALGIEIVENTAERCVAVMPVDHRTVQPFGYLHGGASVALAETAASAGAQNLIDHTTQACVGLEINANHLKSVKEGTVKAIAEPVHIGRTTIVYHIHIYDEQERLICISRCTLAVIKK.

Belongs to the thioesterase PaaI family.

Its function is as follows. Is not required for competence. The chain is Putative esterase ComA2 (yuxO) from Bacillus subtilis (strain 168).